The sequence spans 351 residues: Inhibin beta C chain (351 aa).

The signal sequence occupies residues Met-1 to Val-18. The propeptide occupies Asn-19–Gly-236. Residues Asn-110, Asn-142, and Asn-160 are each glycosylated (N-linked (GlcNAc...) asparagine). 4 disulfides stabilise this stretch: Cys-239-Cys-247, Cys-246-Cys-316, Cys-275-Cys-348, and Cys-279-Cys-350.

It belongs to the TGF-beta family. Homodimeric or heterodimeric through association with alpha and beta subunits, linked by one or more disulfide bonds. Inhibins are heterodimers of one alpha and one beta subunit. Activins are homo- or heterodimers of beta subunits only.

It localises to the secreted. In terms of biological role, inhibins and activins inhibit and activate, respectively, the secretion of follitropin by the pituitary gland. Inhibins/activins are involved in regulating a number of diverse functions such as hypothalamic and pituitary hormone secretion, gonadal hormone secretion, germ cell development and maturation, erythroid differentiation, insulin secretion, nerve cell survival, embryonic axial development or bone growth, depending on their subunit composition. Inhibins appear to oppose the functions of activins. This is Inhibin beta C chain (Inhbc) from Rattus norvegicus (Rat).